The following is a 145-amino-acid chain: uncharacterized protein (145 aa).

Ser67 bears the Phosphoserine mark.

In terms of tissue distribution, expressed in retina and retinoblastoma.

This is an uncharacterized protein from Homo sapiens (Human).